A 290-amino-acid chain; its full sequence is MCDKSKTVLDYTIEFLDKYIPEWFETGNKCPLFIFFSGPQGSGKSFTSIQIYNHLMEKYGGEKSIGYASIDDFYLTHEDQLKLNEQFKNNKLLQGRGLPGTHDMKLLQEVLNTIFNNNEHPDQDTVVLPKYDKSQFKGEGDRCPTGQKIKLPVDIFILEGWFLGFNPILQGIENNDLLTGDMVDVNAKLFFYSDLLWRNPEIKSLGIVFTTDNINNVYGWRLQQEHELISKVGKGMTDEQVHAFVDRYMPSYKLYLNDFVRSESLGSIATLTLGIDSNRNVYSTKTRCIE.

Residue 38-45 (GPQGSGKS) participates in ATP binding.

Belongs to the GLYK kinase family.

It is found in the cytoplasm. The protein localises to the nucleus. In terms of biological role, ATP-dependent kinase whose specificity is not yet known. The sequence is that of Probable ATP-dependent kinase TDA10 (TDA10) from Saccharomyces cerevisiae (strain ATCC 204508 / S288c) (Baker's yeast).